A 226-amino-acid chain; its full sequence is ATP synthase subunit a (226 aa).

5 helical membrane passes run 18 to 38, 74 to 94, 100 to 120, 158 to 180, and 197 to 217; these read LSLN…SYWL, FISL…PYIF, LTLT…YGWI, LAVR…GNTG, and IALL…FAVL.

Belongs to the ATPase A chain family. As to quaternary structure, F-type ATPases have 2 components, CF(1) - the catalytic core - and CF(0) - the membrane proton channel. CF(1) has five subunits: alpha(3), beta(3), gamma(1), delta(1), epsilon(1). CF(0) has three main subunits: a, b and c.

Its subcellular location is the mitochondrion inner membrane. In terms of biological role, mitochondrial membrane ATP synthase (F(1)F(0) ATP synthase or Complex V) produces ATP from ADP in the presence of a proton gradient across the membrane which is generated by electron transport complexes of the respiratory chain. F-type ATPases consist of two structural domains, F(1) - containing the extramembraneous catalytic core and F(0) - containing the membrane proton channel, linked together by a central stalk and a peripheral stalk. During catalysis, ATP synthesis in the catalytic domain of F(1) is coupled via a rotary mechanism of the central stalk subunits to proton translocation. Key component of the proton channel; it may play a direct role in the translocation of protons across the membrane. The chain is ATP synthase subunit a (mt:ATPase6) from Anopheles gambiae (African malaria mosquito).